The chain runs to 84 residues: Small ribosomal subunit protein uS17 (84 aa).

Belongs to the universal ribosomal protein uS17 family. As to quaternary structure, part of the 30S ribosomal subunit.

In terms of biological role, one of the primary rRNA binding proteins, it binds specifically to the 5'-end of 16S ribosomal RNA. This Clostridium perfringens (strain ATCC 13124 / DSM 756 / JCM 1290 / NCIMB 6125 / NCTC 8237 / Type A) protein is Small ribosomal subunit protein uS17.